The following is a 294-amino-acid chain: MNSELDYYEKFEEVHGILMYKDFVKYWDNVEAFQARPDDLVIATYPKSGTTWVSEIVYMIYKEGDVEKCKEDVIFNRIPFLECRKENLMNGVKQLDEMNSPRIVKTHLPPELLPASFWEKDCKIIYLCRNAKDVAVSFYYFFLMVAGHPNPGSFPEFVEKFMQGQVPYGSWYKHVKSWWEKGKSPRVLFLFYEDLKEDIRKEVIKLIHFLERKPSEELVDRIIHHTSFQEMKNNPSTNYTTLPDEIMNQKLSPFMRKGITGDWKNHFTVALNEKFDKHYEQQMKESTLKFRTEI.

Residue Lys-47–Trp-52 coordinates 3'-phosphoadenylyl sulfate. Lys-105–His-107 provides a ligand contact to substrate. His-107 serves as the catalytic Proton acceptor. 3'-phosphoadenylyl sulfate contacts are provided by residues Arg-129, Ser-137, Tyr-192, Thr-226–Met-231, and Arg-256–Gly-258.

The protein belongs to the sulfotransferase 1 family. Homodimer. Liver, intestine and at lower level in the kidney.

Its subcellular location is the cytoplasm. The protein resides in the cytosol. It carries out the reaction estrone + 3'-phosphoadenylyl sulfate = estrone 3-sulfate + adenosine 3',5'-bisphosphate + H(+). It catalyses the reaction (24S)-hydroxycholesterol + 3'-phosphoadenylyl sulfate = (24S)-hydroxycholesterol 3-sulfate + adenosine 3',5'-bisphosphate + H(+). The enzyme catalyses 17beta-estradiol + 3'-phosphoadenylyl sulfate = 17beta-estradiol 3-sulfate + adenosine 3',5'-bisphosphate + H(+). The catalysed reaction is 3beta-hydroxyandrost-5-en-17-one + 3'-phosphoadenylyl sulfate = dehydroepiandrosterone 3-sulfate + adenosine 3',5'-bisphosphate + H(+). It carries out the reaction 4-ethylphenol + 3'-phosphoadenylyl sulfate = 4-ethylphenyl sulfate + adenosine 3',5'-bisphosphate + H(+). With respect to regulation, inhibited by estradiol. Its function is as follows. Sulfotransferase that utilizes 3'-phospho-5'-adenylyl sulfate (PAPS) as sulfonate donor to catalyze the sulfate conjugation of estradiol and estrone. Is a key enzyme in estrogen homeostasis, the sulfation of estrogens leads to their inactivation. Also sulfates dehydroepiandrosterone (DHEA), pregnenolone, (24S)-hydroxycholesterol and xenobiotic compounds like ethinylestradiol, equalenin, diethyl stilbesterol and 1-naphthol at significantly lower efficiency. Does not sulfonate cortisol, testosterone and dopamine. May play a role in gut microbiota-host metabolic interaction. O-sulfonates 4-ethylphenol (4-EP), a dietary tyrosine-derived metabolite produced by gut bacteria. The product 4-EPS crosses the blood-brain barrier and may negatively regulate oligodendrocyte maturation and myelination, affecting the functional connectivity of different brain regions associated with the limbic system. This Homo sapiens (Human) protein is Sulfotransferase 1E1 (SULT1E1).